The chain runs to 304 residues: Aspartate carbamoyltransferase catalytic subunit (304 aa).

The carbamoyl phosphate site is built by R53 and T54. K82 contributes to the L-aspartate binding site. The carbamoyl phosphate site is built by R103, H131, and Q134. L-aspartate contacts are provided by R163 and R224. Positions 263 and 264 each coordinate carbamoyl phosphate.

It belongs to the aspartate/ornithine carbamoyltransferase superfamily. ATCase family. Heterooligomer of catalytic and regulatory chains.

It catalyses the reaction carbamoyl phosphate + L-aspartate = N-carbamoyl-L-aspartate + phosphate + H(+). It functions in the pathway pyrimidine metabolism; UMP biosynthesis via de novo pathway; (S)-dihydroorotate from bicarbonate: step 2/3. Catalyzes the condensation of carbamoyl phosphate and aspartate to form carbamoyl aspartate and inorganic phosphate, the committed step in the de novo pyrimidine nucleotide biosynthesis pathway. In Haloquadratum walsbyi (strain DSM 16790 / HBSQ001), this protein is Aspartate carbamoyltransferase catalytic subunit.